Consider the following 283-residue polypeptide: Elongation factor Ts (283 aa).

Positions T79–V82 are involved in Mg(2+) ion dislocation from EF-Tu.

The protein belongs to the EF-Ts family.

The protein resides in the cytoplasm. Its function is as follows. Associates with the EF-Tu.GDP complex and induces the exchange of GDP to GTP. It remains bound to the aminoacyl-tRNA.EF-Tu.GTP complex up to the GTP hydrolysis stage on the ribosome. This chain is Elongation factor Ts, found in Shewanella frigidimarina (strain NCIMB 400).